The sequence spans 1187 residues: DNA-directed RNA polymerase subunit beta (1187 aa).

Residues 1150-1187 form a disordered region; that stretch reads KDEDDDPASSADDLGFNIGARPDAAAKEDQKAEEPEYQ. Basic and acidic residues predominate over residues 1173–1187; the sequence is AAAKEDQKAEEPEYQ.

It belongs to the RNA polymerase beta chain family. As to quaternary structure, the RNAP catalytic core consists of 2 alpha, 1 beta, 1 beta' and 1 omega subunit. When a sigma factor is associated with the core the holoenzyme is formed, which can initiate transcription.

The enzyme catalyses RNA(n) + a ribonucleoside 5'-triphosphate = RNA(n+1) + diphosphate. DNA-dependent RNA polymerase catalyzes the transcription of DNA into RNA using the four ribonucleoside triphosphates as substrates. The sequence is that of DNA-directed RNA polymerase subunit beta from Bifidobacterium longum (strain NCC 2705).